Reading from the N-terminus, the 214-residue chain is Putative AgrB-like protein (214 aa).

The next 5 membrane-spanning stretches (helical) occupy residues 41-61 (IISVFIIGLLFNIALEALIFL), 82-102 (CTLLGIIISICIGFLVKSSFF), 109-129 (IIVFIGIVIFVFGYFIVFKFA), 154-174 (ILTIYLFIEILSIILYYNLGW), and 182-202 (LSIILGVAWQCITLTYIGNIL).

Belongs to the AgrB family.

Its subcellular location is the cell membrane. May be involved in the proteolytic processing of a quorum sensing system signal molecule precursor. This chain is Putative AgrB-like protein, found in Clostridium perfringens (strain SM101 / Type A).